Here is a 365-residue protein sequence, read N- to C-terminus: Isoflavone 4'-O-methyltransferase (365 aa).

S-adenosyl-L-methionine is bound by residues 207–210 (VAGG), D231, 231–232 (DQ), 251–252 (DM), and K265. The active-site Proton acceptor is H269.

This sequence belongs to the class I-like SAM-binding methyltransferase superfamily. Cation-independent O-methyltransferase family. COMT subfamily.

It carries out the reaction a 4'-hydroxyisoflavone + S-adenosyl-L-methionine = a 4'-methoxyisoflavone + S-adenosyl-L-homocysteine + H(+). The enzyme catalyses (2R,3S)-2,4',7-trihydroxyisoflavanone + S-adenosyl-L-methionine = (2R,3S)-2,7-dihydroxy-4'-methoxyisoflavanone + S-adenosyl-L-homocysteine + H(+). 2-hydroxyisoflavanone 4'-O-methyltransferase involved in the biosynthesis of formononetin. Can use 2,7,4'-trihydroxyisoflavanone as substrate, but not daidzein. The polypeptide is Isoflavone 4'-O-methyltransferase (HI4'OMT) (Lotus japonicus (Lotus corniculatus var. japonicus)).